A 567-amino-acid chain; its full sequence is Hydroxylamine reductase 2 (567 aa).

Residues Cys-5, Cys-8, Cys-17, and Cys-23 each contribute to the [4Fe-4S] cluster site. His-262, Glu-286, Cys-330, Cys-421, Cys-449, Cys-474, Glu-509, and Lys-511 together coordinate hybrid [4Fe-2O-2S] cluster. Cys-421 is subject to Cysteine persulfide.

It belongs to the HCP family. [4Fe-4S] cluster is required as a cofactor. Hybrid [4Fe-2O-2S] cluster serves as cofactor.

The protein resides in the cytoplasm. The catalysed reaction is A + NH4(+) + H2O = hydroxylamine + AH2 + H(+). In terms of biological role, catalyzes the reduction of hydroxylamine to form NH(3) and H(2)O. The chain is Hydroxylamine reductase 2 from Clostridium acetobutylicum (strain ATCC 824 / DSM 792 / JCM 1419 / IAM 19013 / LMG 5710 / NBRC 13948 / NRRL B-527 / VKM B-1787 / 2291 / W).